Reading from the N-terminus, the 430-residue chain is 3-phosphoshikimate 1-carboxyvinyltransferase (430 aa).

3-phosphoshikimate is bound by residues Lys21, Ser22, and Arg26. Phosphoenolpyruvate is bound at residue Lys21. Residues Gly94 and Arg122 each coordinate phosphoenolpyruvate. The 3-phosphoshikimate site is built by Ser168, Gln170, Asp315, and Lys342. Phosphoenolpyruvate is bound at residue Gln170. Asp315 acts as the Proton acceptor in catalysis. The phosphoenolpyruvate site is built by Arg346 and Arg389.

It belongs to the EPSP synthase family. Monomer.

The protein resides in the cytoplasm. It catalyses the reaction 3-phosphoshikimate + phosphoenolpyruvate = 5-O-(1-carboxyvinyl)-3-phosphoshikimate + phosphate. The protein operates within metabolic intermediate biosynthesis; chorismate biosynthesis; chorismate from D-erythrose 4-phosphate and phosphoenolpyruvate: step 6/7. Its function is as follows. Catalyzes the transfer of the enolpyruvyl moiety of phosphoenolpyruvate (PEP) to the 5-hydroxyl of shikimate-3-phosphate (S3P) to produce enolpyruvyl shikimate-3-phosphate and inorganic phosphate. This Salinibacter ruber (strain DSM 13855 / M31) protein is 3-phosphoshikimate 1-carboxyvinyltransferase.